The sequence spans 88 residues: Large ribosomal subunit protein eL31 (88 aa).

Belongs to the eukaryotic ribosomal protein eL31 family.

This Sulfurisphaera tokodaii (strain DSM 16993 / JCM 10545 / NBRC 100140 / 7) (Sulfolobus tokodaii) protein is Large ribosomal subunit protein eL31 (rpl31e).